Here is a 225-residue protein sequence, read N- to C-terminus: Uridylate kinase (225 aa).

An ATP-binding site is contributed by 9 to 10; sequence GS. G44 is a binding site for UMP. ATP-binding residues include G45 and R49. UMP is bound by residues D66 and 114 to 120; that span reads THPGHTT. Residues T140, N141, Y146, and D149 each contribute to the ATP site.

The protein belongs to the UMP kinase family. In terms of assembly, homohexamer.

The protein resides in the cytoplasm. The catalysed reaction is UMP + ATP = UDP + ADP. It participates in pyrimidine metabolism; CTP biosynthesis via de novo pathway; UDP from UMP (UMPK route): step 1/1. Its activity is regulated as follows. Inhibited by UTP. In terms of biological role, catalyzes the reversible phosphorylation of UMP to UDP. This chain is Uridylate kinase, found in Thermococcus sibiricus (strain DSM 12597 / MM 739).